The sequence spans 570 residues: Urease subunit alpha (570 aa).

The region spanning 131 to 570 is the Urease domain; it reads GGFDSHIHFI…LPLAQRYFMF (440 aa). Positions 136, 138, and 219 each coordinate Ni(2+). Lysine 219 is subject to N6-carboxylysine. Histidine 221 is a binding site for substrate. The Ni(2+) site is built by histidine 248 and histidine 274. The active-site Proton donor is the histidine 322. Aspartate 362 lines the Ni(2+) pocket.

This sequence belongs to the metallo-dependent hydrolases superfamily. Urease alpha subunit family. Heterotrimer of UreA (gamma), UreB (beta) and UreC (alpha) subunits. Three heterotrimers associate to form the active enzyme. Ni cation serves as cofactor. Post-translationally, carboxylation allows a single lysine to coordinate two nickel ions.

The protein resides in the cytoplasm. The enzyme catalyses urea + 2 H2O + H(+) = hydrogencarbonate + 2 NH4(+). The protein operates within nitrogen metabolism; urea degradation; CO(2) and NH(3) from urea (urease route): step 1/1. The polypeptide is Urease subunit alpha (Rhodopseudomonas palustris (strain ATCC BAA-98 / CGA009)).